An 852-amino-acid polypeptide reads, in one-letter code: DNA double-strand break repair Rad50 ATPase (852 aa).

ATP is bound by residues N32, G33, A34, G35, K36, S37, S38, R53, Y54, D59, V61, and R63. S37 provides a ligand contact to Mg(2+). Residue Q142 participates in Mg(2+) binding. 2 coiled-coil regions span residues 155–345 (EITE…EELD) and 389–427 (LLSIEKTENETKNELEKLLDELSILKKDHMKWLAYQIAS). The Zinc-hook domain occupies 389–488 (LLSIEKTENE…SLSSLIEDLL (100 aa)). Zn(2+)-binding residues include C435 and C438. 2 coiled-coil regions span residues 460 to 488 (DQKRSELENTLNVLKERKKSLSSLIEDLL) and 534 to 711 (KIEE…LFDK). D797 is a Mg(2+) binding site.

Belongs to the SMC family. RAD50 subfamily. As to quaternary structure, homodimer. Forms a complex with Mre11. It depends on Zn(2+) as a cofactor.

It carries out the reaction ATP + H2O = ADP + phosphate + H(+). Involved in DNA double-strand break repair (DSBR). The Rad50/Mre11 complex possesses single-strand endonuclease activity and ATP-dependent double-strand-specific 3'-5' exonuclease activity. Rad50 provides an ATP-dependent control of Mre11 by positioning DNA ends into the Mre11 active site: ATP-binding induces a large structural change from an open form with accessible Mre11 nuclease sites into a closed form. The protein is DNA double-strand break repair Rad50 ATPase of Thermotoga maritima (strain ATCC 43589 / DSM 3109 / JCM 10099 / NBRC 100826 / MSB8).